The chain runs to 302 residues: MAANYWASTQRRHWLFTREKLAEIREIFREGDKVAHSQFPLPDQRLLNIYFSQQLIKLGKRMSTRQQALATAQVYIKRFYTKNEIRHTNPYLVLTTAFYLACKMEECPQHIRFVVGEARSLWPEFITPDVSKLGECEFSLISEMNSQLIVHHPYRTLSELQPELSLTSDEVALAWSVINDHYLTDLPLLYAPHVIAVMAIIVAVVFKPNSGNFHGSAAPVLAGAMRDGGMNVLAALGDRTGSGPPLKIQKLINWLAESEVDIKGVIECTQELVSLYEVWEQYSEKTCKELLGRMVKAKNLDK.

Positions 53–142 (QQLIKLGKRM…LGECEFSLIS (90 aa)) constitute a Cyclin N-terminal domain.

The protein belongs to the cyclin family. Cyclin C subfamily. In terms of assembly, component of the srb8-11 complex, a regulatory module of the Mediator complex.

The protein resides in the nucleus. Component of the srb8-11 complex. The srb8-11 complex is a regulatory module of the Mediator complex which is itself involved in regulation of basal and activated RNA polymerase II-dependent transcription. The srb8-11 complex may be involved in the transcriptional repression of a subset of genes regulated by Mediator. It may inhibit the association of the Mediator complex with RNA polymerase II to form the holoenzyme complex. The srb8-11 complex phosphorylates the C-terminal domain (CTD) of the largest subunit of RNA polymerase II. The polypeptide is RNA polymerase II holoenzyme cyclin-like subunit (ssn8) (Aspergillus fumigatus (strain ATCC MYA-4609 / CBS 101355 / FGSC A1100 / Af293) (Neosartorya fumigata)).